A 274-amino-acid chain; its full sequence is 2,3,4,5-tetrahydropyridine-2,6-dicarboxylate N-succinyltransferase (274 aa).

Arg104 and Asp141 together coordinate substrate.

The protein belongs to the transferase hexapeptide repeat family. Homotrimer.

It is found in the cytoplasm. It catalyses the reaction (S)-2,3,4,5-tetrahydrodipicolinate + succinyl-CoA + H2O = (S)-2-succinylamino-6-oxoheptanedioate + CoA. Its pathway is amino-acid biosynthesis; L-lysine biosynthesis via DAP pathway; LL-2,6-diaminopimelate from (S)-tetrahydrodipicolinate (succinylase route): step 1/3. In Citrobacter koseri (strain ATCC BAA-895 / CDC 4225-83 / SGSC4696), this protein is 2,3,4,5-tetrahydropyridine-2,6-dicarboxylate N-succinyltransferase.